Reading from the N-terminus, the 597-residue chain is Tubulin polyglutamylase ttll-4 (597 aa).

Positions 1–18 are enriched in polar residues; that stretch reads MSSGYSSAPSVSHTSSEA. 2 disordered regions span residues 1–39 and 80–107; these read MSSGYSSAPSVSHTSSEADLNRIESYEDGVDEEASDEQR and SKSKKKKQCPPNITIEKKNGNSSPFLKS. Over residues 26–35 the composition is skewed to acidic residues; the sequence is YEDGVDEEAS. The TTL domain occupies 134–472; sequence QSRLTWCHNS…HVPPSFDKLH (339 aa). ATP is bound by residues Lys250, 256–257, 278–281, and 291–293; these read RG, QHYI, and KFD. Arg256 serves as a coordination point for a protein. Position 317 (Arg317) interacts with L-glutamate. An ATP-binding site is contributed by 338-339; that stretch reads TN. Positions 340, 341, and 358 each coordinate L-glutamate. The Mg(2+) site is built by Asp418, Glu431, and Asn433. Residue Lys449 participates in L-glutamate binding.

Belongs to the tubulin--tyrosine ligase family. Mg(2+) serves as cofactor.

It catalyses the reaction L-glutamyl-[protein] + L-glutamate + ATP = gamma-L-glutamyl-L-glutamyl-[protein] + ADP + phosphate + H(+). In terms of biological role, monoglutamylase which modifies tubulin, adding a single glutamate on the gamma-carboxyl group of specific glutamate residues of target proteins. Involved in the side-chain initiation step of the polyglutamylation reaction but not in the elongation step. Preferentially modifies beta-tail tubulin over the alpha-tubulin. Involved in side-chain glutamylation of tubulin in sensory cilia. Together with ttll-5 and ttll-11, required for male mating. This chain is Tubulin polyglutamylase ttll-4 (ttll-4), found in Caenorhabditis briggsae.